The primary structure comprises 267 residues: Large ribosomal subunit protein uL2c (267 aa).

This sequence belongs to the universal ribosomal protein uL2 family. Part of the 50S ribosomal subunit.

It is found in the plastid. Its subcellular location is the apicoplast. The polypeptide is Large ribosomal subunit protein uL2c (rpl2) (Toxoplasma gondii).